The primary structure comprises 59 residues: Large ribosomal subunit protein uL30 (59 aa).

This sequence belongs to the universal ribosomal protein uL30 family. Part of the 50S ribosomal subunit.

This Sulfurihydrogenibium sp. (strain YO3AOP1) protein is Large ribosomal subunit protein uL30.